A 501-amino-acid chain; its full sequence is IQ domain-containing protein M (501 aa).

Over residues 237 to 247 (ERQPIKPEPKS) the composition is skewed to basic and acidic residues. The interval 237-262 (ERQPIKPEPKSQPRIKGTPNKTDKLD) is disordered. The IQ domain maps to 290-319 (LIRMVTVMQAHVRGWLERKRLQRVMTKALD).

This Homo sapiens (Human) protein is IQ domain-containing protein M.